A 143-amino-acid chain; its full sequence is MSLTAKDKDTVRAFWAKASGKAAEIGSDALSRMLVVYPQTKTYFSHWKDLSPGSEPVKKHGKSVMGGVADAVMKIEDLNAGLLNLSELHAFTLRVDPANFKILSHNILVVMAIMFPKDFTPEVHVAMDKFLAALSRALAEKYR.

S2 is subject to N-acetylserine. The region spanning 2–143 is the Globin domain; that stretch reads SLTAKDKDTV…LSRALAEKYR (142 aa). H60 serves as a coordination point for O2. Residue H89 participates in heme b binding.

Belongs to the globin family. Hb1 is a heterotetramer of two alpha-1 chains and two beta-1 chains. In terms of tissue distribution, red blood cells.

Involved in oxygen transport from gills to the various peripheral tissues. This chain is Hemoglobin subunit alpha-1 (hba1), found in Anarhichas minor (Arctic spotted wolffish).